Consider the following 36-residue polypeptide: Photosystem I reaction center subunit VIII (36 aa).

The helical transmembrane segment at 9 to 29 (ISVPLVGLVFPAITMVLSFIY) threads the bilayer.

It belongs to the PsaI family.

It localises to the plastid. The protein resides in the chloroplast thylakoid membrane. In terms of biological role, may help in the organization of the PsaL subunit. This chain is Photosystem I reaction center subunit VIII, found in Huperzia lucidula (Shining clubmoss).